The sequence spans 930 residues: Isoleucine--tRNA ligase (930 aa).

The short motif at 57–67 (PYANGNIHVGH) is the 'HIGH' region element. Position 554 (glutamate 554) interacts with L-isoleucyl-5'-AMP. Positions 595–599 (KMSKS) match the 'KMSKS' region motif. Lysine 598 serves as a coordination point for ATP.

Belongs to the class-I aminoacyl-tRNA synthetase family. IleS type 1 subfamily. Monomer.

It localises to the cytoplasm. It carries out the reaction tRNA(Ile) + L-isoleucine + ATP = L-isoleucyl-tRNA(Ile) + AMP + diphosphate. Its function is as follows. Catalyzes the attachment of isoleucine to tRNA(Ile). As IleRS can inadvertently accommodate and process structurally similar amino acids such as valine, to avoid such errors it has two additional distinct tRNA(Ile)-dependent editing activities. One activity is designated as 'pretransfer' editing and involves the hydrolysis of activated Val-AMP. The other activity is designated 'posttransfer' editing and involves deacylation of mischarged Val-tRNA(Ile). The sequence is that of Isoleucine--tRNA ligase from Streptococcus agalactiae serotype Ia (strain ATCC 27591 / A909 / CDC SS700).